Reading from the N-terminus, the 90-residue chain is Small ribosomal subunit protein uS17 (90 aa).

The protein belongs to the universal ribosomal protein uS17 family. Part of the 30S ribosomal subunit.

Functionally, one of the primary rRNA binding proteins, it binds specifically to the 5'-end of 16S ribosomal RNA. The chain is Small ribosomal subunit protein uS17 from Treponema denticola (strain ATCC 35405 / DSM 14222 / CIP 103919 / JCM 8153 / KCTC 15104).